Here is a 181-residue protein sequence, read N- to C-terminus: uncharacterized protein (181 aa).

This is an uncharacterized protein from Ictalurid herpesvirus 1 (strain Auburn) (IcHV-1).